The following is a 332-amino-acid chain: 2,3-diketo-L-gulonate reductase (332 aa).

The active-site Proton donor is histidine 44. Residues 168 to 174 (ITMVDMS), 224 to 225 (WK), and 304 to 306 (GHE) contribute to the NAD(+) site.

This sequence belongs to the LDH2/MDH2 oxidoreductase family. DlgD subfamily. As to quaternary structure, homodimer.

It localises to the cytoplasm. It carries out the reaction 3-dehydro-L-gulonate + NAD(+) = 2,3-dioxo-L-gulonate + NADH + H(+). The catalysed reaction is 3-dehydro-L-gulonate + NADP(+) = 2,3-dioxo-L-gulonate + NADPH + H(+). In terms of biological role, catalyzes the reduction of 2,3-diketo-L-gulonate in the presence of NADH, to form 3-keto-L-gulonate. The chain is 2,3-diketo-L-gulonate reductase from Escherichia coli O6:K15:H31 (strain 536 / UPEC).